The chain runs to 373 residues: Transmembrane protein adipocyte-associated 1 (373 aa).

Asn-11 and Asn-23 each carry an N-linked (GlcNAc...) asparagine glycan. Helical transmembrane passes span 48 to 68 (LLLL…LPSA), 76 to 96 (SSPI…VGIA), 123 to 143 (FFLL…GHLE), 151 to 171 (VLAI…TLEI), 192 to 212 (QFWL…VILP), 234 to 254 (ILAL…FDII), and 265 to 285 (FLYF…GFFG). Asn-361 carries an N-linked (GlcNAc...) asparagine glycan.

Belongs to the UPF0359 family. Ubiquitous, with higher levels in heart, placenta and kidney.

It is found in the membrane. The chain is Transmembrane protein adipocyte-associated 1 (TPRA1) from Homo sapiens (Human).